Consider the following 637-residue polypeptide: Protein kinase domain-containing protein ppk3 (637 aa).

A Protein kinase domain is found at Met-1 to Ile-296. The HEAT repeat unit spans residues Lys-414–Leu-450. Over residues Asn-576–Asn-586 the composition is skewed to basic and acidic residues. The interval Asn-576–Leu-637 is disordered. Acidic residues predominate over residues Glu-608–Val-631.

It is found in the golgi apparatus. The protein is Protein kinase domain-containing protein ppk3 (ppk3) of Schizosaccharomyces pombe (strain 972 / ATCC 24843) (Fission yeast).